The primary structure comprises 95 residues: Integration host factor subunit alpha (95 aa).

The segment at 51–71 is disordered; the sequence is NFDLRDKNERPGRNPKTGEDI. The span at 53–69 shows a compositional bias: basic and acidic residues; the sequence is DLRDKNERPGRNPKTGE.

The protein belongs to the bacterial histone-like protein family. Heterodimer of an alpha and a beta chain.

In terms of biological role, this protein is one of the two subunits of integration host factor, a specific DNA-binding protein that functions in genetic recombination as well as in transcriptional and translational control. The protein is Integration host factor subunit alpha of Vibrio vulnificus (strain CMCP6).